The chain runs to 440 residues: Thymidine phosphorylase (440 aa).

It belongs to the thymidine/pyrimidine-nucleoside phosphorylase family. Homodimer.

It carries out the reaction thymidine + phosphate = 2-deoxy-alpha-D-ribose 1-phosphate + thymine. It functions in the pathway pyrimidine metabolism; dTMP biosynthesis via salvage pathway; dTMP from thymine: step 1/2. The enzymes which catalyze the reversible phosphorolysis of pyrimidine nucleosides are involved in the degradation of these compounds and in their utilization as carbon and energy sources, or in the rescue of pyrimidine bases for nucleotide synthesis. In Rhizobium meliloti (strain 1021) (Ensifer meliloti), this protein is Thymidine phosphorylase.